A 409-amino-acid chain; its full sequence is 1-deoxy-D-xylulose 5-phosphate reductoisomerase (409 aa).

Positions 5, 6, 7, 8, 31, 33, and 122 each coordinate NADPH. K123 provides a ligand contact to 1-deoxy-D-xylulose 5-phosphate. Residue E124 coordinates NADPH. D148 lines the Mn(2+) pocket. Residues S149, E150, S186, and H209 each coordinate 1-deoxy-D-xylulose 5-phosphate. E150 serves as a coordination point for Mn(2+). G215 contributes to the NADPH binding site. Positions 222, 227, 228, and 231 each coordinate 1-deoxy-D-xylulose 5-phosphate. Residue E231 participates in Mn(2+) binding.

The protein belongs to the DXR family. Mg(2+) is required as a cofactor. Mn(2+) serves as cofactor.

The enzyme catalyses 2-C-methyl-D-erythritol 4-phosphate + NADP(+) = 1-deoxy-D-xylulose 5-phosphate + NADPH + H(+). It participates in isoprenoid biosynthesis; isopentenyl diphosphate biosynthesis via DXP pathway; isopentenyl diphosphate from 1-deoxy-D-xylulose 5-phosphate: step 1/6. Catalyzes the NADPH-dependent rearrangement and reduction of 1-deoxy-D-xylulose-5-phosphate (DXP) to 2-C-methyl-D-erythritol 4-phosphate (MEP). The protein is 1-deoxy-D-xylulose 5-phosphate reductoisomerase of Parasynechococcus marenigrum (strain WH8102).